The chain runs to 321 residues: UDP-N-acetylenolpyruvoylglucosamine reductase (321 aa).

In terms of domain architecture, FAD-binding PCMH-type spans 39–205 (RTGGLAELFY…TAALLEGEPG (167 aa)). Residue arginine 185 is part of the active site. Serine 234 functions as the Proton donor in the catalytic mechanism. Glutamate 304 is an active-site residue.

This sequence belongs to the MurB family. FAD is required as a cofactor.

Its subcellular location is the cytoplasm. It carries out the reaction UDP-N-acetyl-alpha-D-muramate + NADP(+) = UDP-N-acetyl-3-O-(1-carboxyvinyl)-alpha-D-glucosamine + NADPH + H(+). Its pathway is cell wall biogenesis; peptidoglycan biosynthesis. In terms of biological role, cell wall formation. The protein is UDP-N-acetylenolpyruvoylglucosamine reductase of Bartonella quintana (strain Toulouse) (Rochalimaea quintana).